Reading from the N-terminus, the 1902-residue chain is Putative surface cell antigen sca1 (1902 aa).

An N-terminal signal peptide occupies residues 1-28 (MNKLTEQHLLKKSRFLKYSLLASISVGA). Disordered stretches follow at residues 140–273 (GIEK…TFVP), 420–485 (QGVF…SRTA), 707–729 (TTTT…YSSS), 858–885 (NRRR…AWGN), and 1470–1548 (KSES…SDGD). Composition is skewed to polar residues over residues 146-159 (QSQN…TEQM) and 168-197 (TASS…SPEH). Over residues 199-212 (TTAPGTPSSTPATP) the composition is skewed to low complexity. The segment covering 225-238 (LGANTPPNINTNSK) has biased composition (polar residues). The segment covering 246–264 (SSSGPQQQAVQSSSQVKSE) has biased composition (low complexity). The segment covering 423 to 439 (FNKNKSSGGNARKSSAG) has biased composition (polar residues). Positions 445–482 (KKQEAQKQLSEIKKQEKAIKTASDKAKEVAASAKKETS) are enriched in basic and acidic residues. Positions 863–874 (RDGETSKQRTVD) are enriched in basic and acidic residues. Residues 1491-1507 (LSSLPALASSNESALAL) are compositionally biased toward low complexity. Residues 1521–1538 (SSEDEESYDSGFEEEEET) are compositionally biased toward acidic residues. One can recognise an Autotransporter domain in the interval 1618–1902 (ESHIKRGLWM…QGSVKLKVNL (285 aa)).

The protein localises to the cell outer membrane. This is Putative surface cell antigen sca1 (sca1) from Rickettsia conorii (strain ATCC VR-613 / Malish 7).